Consider the following 441-residue polypeptide: Ribosomal protein uS12 methylthiotransferase RimO (441 aa).

The 111-residue stretch at 6–116 (PKVGFVSLGC…VMTAVHANLP (111 aa)) folds into the MTTase N-terminal domain. Cysteine 15, cysteine 51, cysteine 80, cysteine 147, cysteine 151, and cysteine 154 together coordinate [4Fe-4S] cluster. The 238-residue stretch at 133-370 (LTPQHYAYLK…MEVQESISAE (238 aa)) folds into the Radical SAM core domain. Positions 373-439 (RRKIGRIETV…GHDLWAAPPA (67 aa)) constitute a TRAM domain.

The protein belongs to the methylthiotransferase family. RimO subfamily. The cofactor is [4Fe-4S] cluster.

The protein localises to the cytoplasm. It carries out the reaction L-aspartate(89)-[ribosomal protein uS12]-hydrogen + (sulfur carrier)-SH + AH2 + 2 S-adenosyl-L-methionine = 3-methylsulfanyl-L-aspartate(89)-[ribosomal protein uS12]-hydrogen + (sulfur carrier)-H + 5'-deoxyadenosine + L-methionine + A + S-adenosyl-L-homocysteine + 2 H(+). Catalyzes the methylthiolation of an aspartic acid residue of ribosomal protein uS12. This Methylobacillus flagellatus (strain ATCC 51484 / DSM 6875 / VKM B-1610 / KT) protein is Ribosomal protein uS12 methylthiotransferase RimO.